We begin with the raw amino-acid sequence, 130 residues long: Small ribosomal subunit protein uS9 (130 aa).

Residues 98–130 are disordered; that stretch reads LKRAGFLTRDARKKERKKYGQPGARKRFQYSKR. Residues 111 to 130 are compositionally biased toward basic residues; sequence KERKKYGQPGARKRFQYSKR.

This sequence belongs to the universal ribosomal protein uS9 family.

The polypeptide is Small ribosomal subunit protein uS9 (Sorangium cellulosum (strain So ce56) (Polyangium cellulosum (strain So ce56))).